The chain runs to 180 residues: Cell number regulator 7 (180 aa).

The helical transmembrane segment at 80 to 102 (AAAGAIYTLLACFTGFQCHWIYS) threads the bilayer.

Belongs to the cornifelin family. In terms of tissue distribution, expressed in roots, leaves, immature ears and silks. Detected preferentially in silks.

The protein localises to the membrane. The sequence is that of Cell number regulator 7 (CNR7) from Zea mays (Maize).